Reading from the N-terminus, the 363-residue chain is NAD(P)H-quinone oxidoreductase subunit 1, chloroplastic (363 aa).

Helical transmembrane passes span 30–50 (LVPI…IVWL), 98–118 (FSIG…VIPF), 127–147 (LSIG…GLLM), 165–185 (AAQS…ISLL), 203–223 (FWGW…ISSL), 248–268 (YSGI…LVSS), 300–320 (VFGT…FLFI), and 336–356 (LLNL…LLTT).

Belongs to the complex I subunit 1 family. As to quaternary structure, NDH is composed of at least 16 different subunits, 5 of which are encoded in the nucleus.

The protein localises to the plastid. The protein resides in the chloroplast thylakoid membrane. The enzyme catalyses a plastoquinone + NADH + (n+1) H(+)(in) = a plastoquinol + NAD(+) + n H(+)(out). The catalysed reaction is a plastoquinone + NADPH + (n+1) H(+)(in) = a plastoquinol + NADP(+) + n H(+)(out). Functionally, NDH shuttles electrons from NAD(P)H:plastoquinone, via FMN and iron-sulfur (Fe-S) centers, to quinones in the photosynthetic chain and possibly in a chloroplast respiratory chain. The immediate electron acceptor for the enzyme in this species is believed to be plastoquinone. Couples the redox reaction to proton translocation, and thus conserves the redox energy in a proton gradient. The protein is NAD(P)H-quinone oxidoreductase subunit 1, chloroplastic of Solanum lycopersicum (Tomato).